A 93-amino-acid polypeptide reads, in one-letter code: Large ribosomal subunit protein bL27 (93 aa).

This sequence belongs to the bacterial ribosomal protein bL27 family.

This Trichormus variabilis (strain ATCC 29413 / PCC 7937) (Anabaena variabilis) protein is Large ribosomal subunit protein bL27.